Consider the following 626-residue polypeptide: Threonine--tRNA ligase (626 aa).

Residues 1–144 (MRMLLIHADY…LSRTIVPEEG (144 aa)) form an editing domain region. The tract at residues 207 to 506 (PHVRLMLEHE…QAQGKKPMFP (300 aa)) is catalytic. Positions 299, 351, and 475 each coordinate Zn(2+).

The protein belongs to the class-II aminoacyl-tRNA synthetase family. In terms of assembly, homodimer. The cofactor is Zn(2+).

The protein localises to the cytoplasm. The enzyme catalyses tRNA(Thr) + L-threonine + ATP = L-threonyl-tRNA(Thr) + AMP + diphosphate + H(+). Functionally, catalyzes the attachment of threonine to tRNA(Thr) in a two-step reaction: L-threonine is first activated by ATP to form Thr-AMP and then transferred to the acceptor end of tRNA(Thr). Also edits incorrectly charged L-seryl-tRNA(Thr). The protein is Threonine--tRNA ligase of Thermococcus gammatolerans (strain DSM 15229 / JCM 11827 / EJ3).